The chain runs to 662 residues: uncharacterized protein (662 aa).

Disordered stretches follow at residues 1 to 94 (MSQR…NENN), 107 to 237 (DHNN…VKYH), 288 to 328 (ETTS…TPSA), 406 to 440 (QSSF…PIQM), and 506 to 580 (QNSI…MVSP). The segment covering 25–49 (TTTTTPTPTTTTTTTSSLSSSTSST) has biased composition (low complexity). The segment covering 77–87 (DNIKLDNEKTF) has biased composition (basic and acidic residues). Over residues 109-161 (NNNNNNNNNNNNNNNNNNNNNNNNNNNNNNNNNNNNNNNNNNNNNNNNNNNNN) the composition is skewed to low complexity. Polar residues predominate over residues 162–176 (DTQKGTNKNENNCTD). Low complexity predominate over residues 183 to 196 (STSTTSSSETGSST). The span at 203–212 (KTPQSCLKKS) shows a compositional bias: polar residues. Positions 213–224 (NNNNNDNNNNNN) are enriched in low complexity. Over residues 226–235 (KTPRSTKKVK) the composition is skewed to basic residues. Low complexity-rich tracts occupy residues 288–308 (ETTS…TPIP), 413–434 (PTNN…TTTP), 515–526 (PTKSSSSTSIQQ), and 535–575 (NINN…NNNN).

This is an uncharacterized protein from Dictyostelium discoideum (Social amoeba).